A 329-amino-acid polypeptide reads, in one-letter code: Glycerol-3-phosphate dehydrogenase [NAD(P)+] (329 aa).

Residues tryptophan 15, histidine 35, and lysine 107 each contribute to the NADPH site. Positions 107, 135, and 137 each coordinate sn-glycerol 3-phosphate. Residue alanine 139 participates in NADPH binding. The sn-glycerol 3-phosphate site is built by lysine 190, aspartate 243, serine 253, arginine 254, and asparagine 255. Lysine 190 acts as the Proton acceptor in catalysis. Arginine 254 serves as a coordination point for NADPH. NADPH-binding residues include leucine 276 and glutamate 278.

Belongs to the NAD-dependent glycerol-3-phosphate dehydrogenase family.

It localises to the cytoplasm. The enzyme catalyses sn-glycerol 3-phosphate + NAD(+) = dihydroxyacetone phosphate + NADH + H(+). It carries out the reaction sn-glycerol 3-phosphate + NADP(+) = dihydroxyacetone phosphate + NADPH + H(+). Its pathway is membrane lipid metabolism; glycerophospholipid metabolism. Catalyzes the reduction of the glycolytic intermediate dihydroxyacetone phosphate (DHAP) to sn-glycerol 3-phosphate (G3P), the key precursor for phospholipid synthesis. The polypeptide is Glycerol-3-phosphate dehydrogenase [NAD(P)+] (Rhodopseudomonas palustris (strain TIE-1)).